We begin with the raw amino-acid sequence, 431 residues long: Glutamyl-tRNA reductase (431 aa).

Residues 49-52 (TCDR), S109, 114-116 (EPH), and Q120 contribute to the substrate site. The active-site Nucleophile is the C50. 189–194 (GTQEMG) serves as a coordination point for NADP(+).

This sequence belongs to the glutamyl-tRNA reductase family. In terms of assembly, homodimer.

It catalyses the reaction (S)-4-amino-5-oxopentanoate + tRNA(Glu) + NADP(+) = L-glutamyl-tRNA(Glu) + NADPH + H(+). The protein operates within porphyrin-containing compound metabolism; protoporphyrin-IX biosynthesis; 5-aminolevulinate from L-glutamyl-tRNA(Glu): step 1/2. Its pathway is porphyrin-containing compound metabolism; chlorophyll biosynthesis. In terms of biological role, catalyzes the NADPH-dependent reduction of glutamyl-tRNA(Glu) to glutamate 1-semialdehyde (GSA). This chain is Glutamyl-tRNA reductase, found in Rhodospirillum rubrum (strain ATCC 11170 / ATH 1.1.1 / DSM 467 / LMG 4362 / NCIMB 8255 / S1).